The sequence spans 442 residues: Probable 6-phospho-beta-glucosidase (442 aa).

5–73 (LKIVTIGGGS…VPIDIHLTLD (69 aa)) is an NAD(+) binding site. Substrate-binding residues include Arg-96 and Asn-150. Mn(2+) contacts are provided by Cys-172 and His-202. The Proton acceptor role is filled by Tyr-256.

Belongs to the glycosyl hydrolase 4 family. The cofactor is NAD(+). A divalent metal cation serves as cofactor.

The enzyme catalyses 6-phospho-beta-D-glucosyl-(1-&gt;4)-D-glucose + H2O = D-glucose 6-phosphate + D-glucose. Functionally, hydrolyzes phospho-beta-glucosides. This chain is Probable 6-phospho-beta-glucosidase (licH), found in Bacillus subtilis (strain 168).